Reading from the N-terminus, the 260-residue chain is Mediator of RNA polymerase II transcription subunit 8 (260 aa).

The protein belongs to the Mediator complex subunit 8 family. In terms of assembly, component of the Mediator complex.

It is found in the nucleus. Component of the Mediator complex, a coactivator involved in the regulated transcription of nearly all RNA polymerase II-dependent genes. Mediator functions as a bridge to convey information from gene-specific regulatory proteins to the basal RNA polymerase II transcription machinery. Mediator is recruited to promoters by direct interactions with regulatory proteins and serves as a scaffold for the assembly of a functional preinitiation complex with RNA polymerase II and the general transcription factors. This is Mediator of RNA polymerase II transcription subunit 8 (med8) from Emericella nidulans (strain FGSC A4 / ATCC 38163 / CBS 112.46 / NRRL 194 / M139) (Aspergillus nidulans).